A 108-amino-acid polypeptide reads, in one-letter code: Large ribosomal subunit protein eL33A (108 aa).

The protein belongs to the eukaryotic ribosomal protein eL33 family. In terms of assembly, component of the large ribosomal subunit (LSU). Mature yeast ribosomes consist of a small (40S) and a large (60S) subunit. The 40S small subunit contains 1 molecule of ribosomal RNA (18S rRNA) and at least 33 different proteins. The large 60S subunit contains 3 rRNA molecules (25S, 5.8S and 5S rRNA) and at least 46 different proteins.

Its subcellular location is the cytoplasm. It localises to the nucleus. It is found in the nucleolus. Its function is as follows. Component of the ribosome, a large ribonucleoprotein complex responsible for the synthesis of proteins in the cell. The small ribosomal subunit (SSU) binds messenger RNAs (mRNAs) and translates the encoded message by selecting cognate aminoacyl-transfer RNA (tRNA) molecules. The large subunit (LSU) contains the ribosomal catalytic site termed the peptidyl transferase center (PTC), which catalyzes the formation of peptide bonds, thereby polymerizing the amino acids delivered by tRNAs into a polypeptide chain. The nascent polypeptides leave the ribosome through a tunnel in the LSU and interact with protein factors that function in enzymatic processing, targeting, and the membrane insertion of nascent chains at the exit of the ribosomal tunnel. The protein is Large ribosomal subunit protein eL33A (rpl35b) of Schizosaccharomyces pombe (strain 972 / ATCC 24843) (Fission yeast).